A 200-amino-acid polypeptide reads, in one-letter code: Large ribosomal subunit protein uL4 (200 aa).

The segment at 38-68 is disordered; that stretch reads GRQGSKQQKTRSDVRGGGKRPWRQKGTGRAR. The span at 54–65 shows a compositional bias: basic residues; that stretch reads GGKRPWRQKGTG.

It belongs to the universal ribosomal protein uL4 family. As to quaternary structure, part of the 50S ribosomal subunit.

Its function is as follows. One of the primary rRNA binding proteins, this protein initially binds near the 5'-end of the 23S rRNA. It is important during the early stages of 50S assembly. It makes multiple contacts with different domains of the 23S rRNA in the assembled 50S subunit and ribosome. In terms of biological role, forms part of the polypeptide exit tunnel. This chain is Large ribosomal subunit protein uL4, found in Pseudomonas syringae pv. tomato (strain ATCC BAA-871 / DC3000).